Reading from the N-terminus, the 490-residue chain is MINKENSVGITIYNTLGRKKEPFVPMIPGKVGMYVCGVTVYDYSHIGHARVMVVFDVIARHLRVTGFDLTYVRNFTDIDDKIIKRANERGESIQTLTQRYIDAFHQDMAALGVQPADIEPKATEHLPEMMQMIGTLMDKGVAYASGGDVYYAVERFANYGQLSGKVLDEQEAGARVEVDSNKQNPMDFVLWKGAKPEEPQWDSPWGAGRPGWHIECSAMGTKYLGASFDIHGGGRDLIFPHHENEIAQTEGCTGQHAVNYWIHNGFVNVVNEEGESEKMSKSLGNFHTIRDLLALYPGEVLRFFILNSHYRSPLDFSFSLLEAAKAGLDRIYTALRSAQALLGKLPGTPIGEPADVPAGAPQDLVENYLKAMDDDFNTPQAIAFLFEAAKMLNTAISEQKDPAVIATWARLIRGLGHHLGLAGQDPELWFRSGIGAEQGLQAEAIEALIAERSAARAAKNWAESDRIRDTLAQQGIVLEDGQHGTQWSRK.

C36 lines the Zn(2+) pocket. The 'HIGH' region motif lies at 38 to 48; the sequence is VTVYDYSHIGH. 3 residues coordinate Zn(2+): C216, H241, and E245. The 'KMSKS' region signature appears at 278-282; the sequence is KMSKS. Position 281 (K281) interacts with ATP.

The protein belongs to the class-I aminoacyl-tRNA synthetase family. Monomer. Zn(2+) serves as cofactor.

It is found in the cytoplasm. The enzyme catalyses tRNA(Cys) + L-cysteine + ATP = L-cysteinyl-tRNA(Cys) + AMP + diphosphate. In Magnetococcus marinus (strain ATCC BAA-1437 / JCM 17883 / MC-1), this protein is Cysteine--tRNA ligase.